A 327-amino-acid chain; its full sequence is MDAAWRGGVGCSPVCLDLCVGLSPVREPSAARHELLDRPAGCRGGGDSKSMTNDEAKIVEAKVTQMSEENRRLTEVIARLYGGQIPRLGLDGSASPPRPVSPLSGKKRSRESMETANSCDANSNRHQGGDADHAESFAADDGTCRRIKVSRVCRRIDPSDTSLVVKDGYQWRKYGQKVTRDNPSPRAYFRCAFAPSCPVKKKVQRSAEDSSLLVATYEGEHNHPHPSPRAGELPAAAGGAGGSLPCSISINSSGPTITLDLTKNGGAVQVVEAAHPPPPPDLKEVCREVASPEFRTALVEQMASALTSDPKFTGALAAAILQKLPEF.

Residues 56 to 76 (AKIVEAKVTQMSEENRRLTEV) are a coiled coil. The segment at 87 to 135 (RLGLDGSASPPRPVSPLSGKKRSRESMETANSCDANSNRHQGGDADHAE) is disordered. The Nuclear localization signal signature appears at 106–112 (KKRSRES). Positions 114–126 (ETANSCDANSNRH) are enriched in polar residues. Positions 160–226 (DTSLVVKDGY…YEGEHNHPHP (67 aa)) form a DNA-binding region, WRKY.

Belongs to the WRKY group II-a family.

The protein localises to the nucleus. Transcription repressor. Interacts specifically with the W box (5'-(T)TGAC[CT]-3'), a frequently occurring elicitor-responsive cis-acting element. Regulates, probably indirectly, the activation of defense-related genes during defense response. Modulates plant innate immunity against X.oryzae pv. oryzae (Xoo). This chain is WRKY transcription factor WRKY76, found in Oryza sativa subsp. japonica (Rice).